A 461-amino-acid chain; its full sequence is Aspartyl/glutamyl-tRNA(Asn/Gln) amidotransferase subunit B (461 aa).

It belongs to the GatB/GatE family. GatB subfamily. Heterotrimer of A, B and C subunits.

The enzyme catalyses L-glutamyl-tRNA(Gln) + L-glutamine + ATP + H2O = L-glutaminyl-tRNA(Gln) + L-glutamate + ADP + phosphate + H(+). The catalysed reaction is L-aspartyl-tRNA(Asn) + L-glutamine + ATP + H2O = L-asparaginyl-tRNA(Asn) + L-glutamate + ADP + phosphate + 2 H(+). Its function is as follows. Allows the formation of correctly charged Asn-tRNA(Asn) or Gln-tRNA(Gln) through the transamidation of misacylated Asp-tRNA(Asn) or Glu-tRNA(Gln) in organisms which lack either or both of asparaginyl-tRNA or glutaminyl-tRNA synthetases. The reaction takes place in the presence of glutamine and ATP through an activated phospho-Asp-tRNA(Asn) or phospho-Glu-tRNA(Gln). This is Aspartyl/glutamyl-tRNA(Asn/Gln) amidotransferase subunit B from Methanopyrus kandleri (strain AV19 / DSM 6324 / JCM 9639 / NBRC 100938).